The primary structure comprises 566 residues: APC membrane recruitment protein 2 (566 aa).

Disordered stretches follow at residues 120-176 (KKNG…PGLI), 192-237 (TQKP…SPCS), 277-307 (VTGC…GKKV), and 342-533 (MIPP…RTKI). Composition is skewed to basic and acidic residues over residues 123–134 (GKSENVRGEQAE), 155–168 (SKKD…KEGA), and 192–204 (TQKP…KSTE). Composition is skewed to basic and acidic residues over residues 364 to 377 (REVK…DRNA) and 389 to 411 (YRKE…RNSD). The span at 464–476 (PPLSHSHSKPLSP) shows a compositional bias: low complexity. Polar residues-rich tracts occupy residues 477–489 (VTTS…ASSN) and 504–517 (HTTN…SGSA).

The protein belongs to the Amer family.

The protein resides in the cell membrane. Negative regulator of the canonical Wnt signaling pathway involved in neuroectodermal patterning. Acts by specifically binding phosphatidylinositol 4,5-bisphosphate (PtdIns(4,5)P2), translocating to the cell membrane and interacting with key regulators of the canonical Wnt signaling pathway, such as components of the beta-catenin destruction complex. This is APC membrane recruitment protein 2 (amer2) from Xenopus tropicalis (Western clawed frog).